A 569-amino-acid polypeptide reads, in one-letter code: F-box/WD repeat-containing protein 5 (569 aa).

The F-box domain maps to 3–49 (EGGMPLLPDSLVYQIFLSLGPADVLAAGLVCRQWQAVSRDEFLWREQ). Residues 90–129 (EHTDQVLHLSFSHSGYQFASCSKDCTVKIWNNDLTISLLH) form a WD 1 repeat. Phosphoserine; by PLK4 is present on Ser-151. The short motif at 308-316 (RRVFDSVLD) is the D-box element. WD repeat units follow at residues 470–509 (TPND…CLAK) and 511–551 (RHED…RVLQ).

This sequence belongs to the FBXW5 family. As to quaternary structure, part of the SCF (SKP1-CUL1-F-box) E3 ubiquitin-protein ligase complex SCF(FBXW5) composed of CUL1, SKP1, RBX1 and FBXW5. Component of the DCX(FBXW5) E3 ubiquitin ligase complex, at least composed of (CUL4A or CUL4B), DDB1, FBXW5 and RBX1. Interacts with CDC20, EPS8, TSC1, TSC2 and SASS6. Interacts with TNFAIP8L1; TNFAIP8L1 competes with TSC2 to bind FBXW5 increasing TSC2 stability by preventing its ubiquitination. In terms of processing, phosphorylated at Ser-151 by PLK4 during the G1/S transition, leading to inhibit its ability to ubiquitinate SASS6. Post-translationally, ubiquitinated and degraded by the APC/C complex during mitosis and G1 phase.

The protein localises to the cytoplasm. Its pathway is protein modification; protein ubiquitination. In terms of biological role, substrate recognition component of both SCF (SKP1-CUL1-F-box protein) and DCX (DDB1-CUL4-X-box) E3 ubiquitin-protein ligase complexes. Substrate recognition component of the SCF(FBXW5) E3 ubiquitin-protein ligase complex which mediates the ubiquitination and subsequent proteasomal degradation of SASS6 during S phase, leading to prevent centriole reduplication. The SCF(FBXW5) complex also mediates ubiquitination and degradation of actin-regulator EPS8 during G2 phase, leading to the transient degradation of EPS8 and subsequent cell shape changes required to allow mitotic progression. Substrate-specific adapter of the DCX(FBXW5) E3 ubiquitin-protein ligase complex which mediates the polyubiquitination and subsequent degradation of TSC2. May also act as a negative regulator of MAP3K7/TAK1 signaling in the interleukin-1B (IL1B) signaling pathway. This Rattus norvegicus (Rat) protein is F-box/WD repeat-containing protein 5 (Fbxw5).